Here is a 458-residue protein sequence, read N- to C-terminus: ATP synthase subunit beta (458 aa).

An ATP-binding site is contributed by 148 to 155 (GGAGVGKT).

It belongs to the ATPase alpha/beta chains family. F-type ATPases have 2 components, CF(1) - the catalytic core - and CF(0) - the membrane proton channel. CF(1) has five subunits: alpha(3), beta(3), gamma(1), delta(1), epsilon(1). CF(0) has three main subunits: a(1), b(2) and c(9-12). The alpha and beta chains form an alternating ring which encloses part of the gamma chain. CF(1) is attached to CF(0) by a central stalk formed by the gamma and epsilon chains, while a peripheral stalk is formed by the delta and b chains.

The protein resides in the cell inner membrane. It carries out the reaction ATP + H2O + 4 H(+)(in) = ADP + phosphate + 5 H(+)(out). Functionally, produces ATP from ADP in the presence of a proton gradient across the membrane. The catalytic sites are hosted primarily by the beta subunits. The sequence is that of ATP synthase subunit beta from Pseudomonas putida (strain ATCC 700007 / DSM 6899 / JCM 31910 / BCRC 17059 / LMG 24140 / F1).